The primary structure comprises 441 residues: MIIPSLEELDSLKYSDLQNLAKSLGLRANLRATKLLKALKGYIKHEARKGNENQDESQTSASSCDETEIQISNQEEAERQPLGHVTKTRRRCKTVRVDPDSQQNHSEIKISNPTEFQNHEKQESQDLRATAKVPSPPDEHQEAENAVSSGNRDSKVPSEGKKSLYTDESSKPGKNKRTAITTPNFKKLHEAHFKEMESIDQYIERKKKHFEEHNSMNELKQQPINKGGVRTPVPPRGRLSVASTPISQRRSQGRSCGPASQSTLGLKGSLKRSAISAAKTGVRFSAATKDNEHKRSLTKTPARKSAHVTVSGGTPKGEAVLGTHKLKTITGNSAAVITPFKLTTEATQTPVSNKKPVFDLKASLSRPLNYEPHKGKLKPWGQSKENNYLNQHVNRINFYKKTYKQPHLQTKEEQRKKREQERKEKKAKVLGMRRGLILAED.

Disordered stretches follow at residues 47–186 (ARKG…PNFK) and 216–267 (MNEL…LGLK). Composition is skewed to polar residues over residues 56-74 (ESQT…ISNQ) and 100-116 (DSQQ…PTEF). Over residues 117–126 (QNHEKQESQD) the composition is skewed to basic and acidic residues. Ser-124 carries the post-translational modification Phosphoserine; by ATM. Position 135 is a phosphoserine (Ser-135). Over residues 152 to 171 (RDSKVPSEGKKSLYTDESSK) the composition is skewed to basic and acidic residues. Thr-182 is subject to Phosphothreonine. Positions 237 to 382 (GRLSVASTPI…HKGKLKPWGQ (146 aa)) are interaction with microtubules. Ser-240 is subject to Phosphoserine. Over residues 241–264 (VASTPISQRRSQGRSCGPASQSTL) the composition is skewed to polar residues. The residue at position 244 (Thr-244) is a Phosphothreonine. Residues Ser-247, Ser-255, Ser-269, Ser-276, and Ser-311 each carry the phosphoserine modification. A disordered region spans residues 286–319 (AATKDNEHKRSLTKTPARKSAHVTVSGGTPKGEA). Thr-314, Thr-338, and Thr-349 each carry phosphothreonine. Residues Ser-352 and Ser-363 each carry the phosphoserine modification. The KEN box signature appears at 384 to 390 (KENNYLN). The segment at 401-427 (KTYKQPHLQTKEEQRKKREQERKEKKA) is disordered. The stretch at 407–432 (HLQTKEEQRKKREQERKEKKAKVLGM) forms a coiled coil. A compositionally biased stretch (basic and acidic residues) spans 409 to 424 (QTKEEQRKKREQERKE). Lys-411 carries the post-translational modification N6-acetyllysine.

The protein belongs to the NUSAP family. Interacts with DNA and microtubules. Microtubule bundling is inhibited by IPO7, KPNA2 and KPNB1 while association with DNA is also inhibited by IPO7 and KPNA2. Post-translationally, ubiquitinated. Ubiquitination by FZR1 may lead to proteasome-dependent degradation of this protein. In terms of processing, phosphorylation by ATM in G2/M-phase induces mitotic arrest.

The protein resides in the cytoplasm. It localises to the nucleus. It is found in the nucleolus. The protein localises to the cytoskeleton. Its subcellular location is the spindle. The protein resides in the chromosome. In terms of biological role, microtubule-associated protein with the capacity to bundle and stabilize microtubules. May associate with chromosomes and promote the organization of mitotic spindle microtubules around them. This chain is Nucleolar and spindle-associated protein 1 (NUSAP1), found in Homo sapiens (Human).